Here is a 72-residue protein sequence, read N- to C-terminus: UPF0270 protein YheU (72 aa).

It belongs to the UPF0270 family.

The polypeptide is UPF0270 protein YheU (Salmonella arizonae (strain ATCC BAA-731 / CDC346-86 / RSK2980)).